Consider the following 377-residue polypeptide: tRNA(Met) cytidine acetate ligase (377 aa).

ATP contacts are provided by residues 7–20 (ITEY…HLYH), Gly101, Asn152, and Arg179.

This sequence belongs to the TmcAL family.

It localises to the cytoplasm. It catalyses the reaction cytidine(34) in elongator tRNA(Met) + acetate + ATP = N(4)-acetylcytidine(34) in elongator tRNA(Met) + AMP + diphosphate. Catalyzes the formation of N(4)-acetylcytidine (ac(4)C) at the wobble position of elongator tRNA(Met), using acetate and ATP as substrates. First activates an acetate ion to form acetyladenylate (Ac-AMP) and then transfers the acetyl group to tRNA to form ac(4)C34. The polypeptide is tRNA(Met) cytidine acetate ligase (Oenococcus oeni (strain ATCC BAA-331 / PSU-1)).